The sequence spans 424 residues: Tyrosine--tRNA ligase (424 aa).

Y37 lines the L-tyrosine pocket. The 'HIGH' region motif lies at 42-51 (PTADSLHLGH). Residues Y175 and Q179 each coordinate L-tyrosine. The 'KMSKS' region signature appears at 235–239 (KFGKT). An ATP-binding site is contributed by K238. An S4 RNA-binding domain is found at 357–414 (ADLQQALVNAELVPSRGQARTMIGSNAVTINGEKQSNAEYNFSDADRLFGRYTLLRRG).

It belongs to the class-I aminoacyl-tRNA synthetase family. TyrS type 1 subfamily. As to quaternary structure, homodimer.

Its subcellular location is the cytoplasm. The catalysed reaction is tRNA(Tyr) + L-tyrosine + ATP = L-tyrosyl-tRNA(Tyr) + AMP + diphosphate + H(+). Functionally, catalyzes the attachment of tyrosine to tRNA(Tyr) in a two-step reaction: tyrosine is first activated by ATP to form Tyr-AMP and then transferred to the acceptor end of tRNA(Tyr). This is Tyrosine--tRNA ligase from Serratia proteamaculans (strain 568).